We begin with the raw amino-acid sequence, 739 residues long: Phosphoribosylformylglycinamidine synthase subunit PurL (739 aa).

Residue H54 is part of the active site. The ATP site is built by Y57 and K96. E98 lines the Mg(2+) pocket. Substrate-binding positions include 99–102 and R121; that span reads SHNH. H100 (proton acceptor) is an active-site residue. D122 provides a ligand contact to Mg(2+). Residue Q245 participates in substrate binding. Residue D273 participates in Mg(2+) binding. 317–319 contacts substrate; the sequence is ESQ. D500 and G537 together coordinate ATP. Residue N538 coordinates Mg(2+). S540 is a substrate binding site.

The protein belongs to the FGAMS family. Monomer. Part of the FGAM synthase complex composed of 1 PurL, 1 PurQ and 2 PurS subunits.

The protein resides in the cytoplasm. The catalysed reaction is N(2)-formyl-N(1)-(5-phospho-beta-D-ribosyl)glycinamide + L-glutamine + ATP + H2O = 2-formamido-N(1)-(5-O-phospho-beta-D-ribosyl)acetamidine + L-glutamate + ADP + phosphate + H(+). The protein operates within purine metabolism; IMP biosynthesis via de novo pathway; 5-amino-1-(5-phospho-D-ribosyl)imidazole from N(2)-formyl-N(1)-(5-phospho-D-ribosyl)glycinamide: step 1/2. Its function is as follows. Part of the phosphoribosylformylglycinamidine synthase complex involved in the purines biosynthetic pathway. Catalyzes the ATP-dependent conversion of formylglycinamide ribonucleotide (FGAR) and glutamine to yield formylglycinamidine ribonucleotide (FGAM) and glutamate. The FGAM synthase complex is composed of three subunits. PurQ produces an ammonia molecule by converting glutamine to glutamate. PurL transfers the ammonia molecule to FGAR to form FGAM in an ATP-dependent manner. PurS interacts with PurQ and PurL and is thought to assist in the transfer of the ammonia molecule from PurQ to PurL. The polypeptide is Phosphoribosylformylglycinamidine synthase subunit PurL (Bacillus cytotoxicus (strain DSM 22905 / CIP 110041 / 391-98 / NVH 391-98)).